The sequence spans 304 residues: Glycine--tRNA ligase alpha subunit (304 aa).

Belongs to the class-II aminoacyl-tRNA synthetase family. As to quaternary structure, tetramer of two alpha and two beta subunits.

It is found in the cytoplasm. The enzyme catalyses tRNA(Gly) + glycine + ATP = glycyl-tRNA(Gly) + AMP + diphosphate. The polypeptide is Glycine--tRNA ligase alpha subunit (Vibrio atlanticus (strain LGP32) (Vibrio splendidus (strain Mel32))).